A 356-amino-acid polypeptide reads, in one-letter code: Cytochrome c oxidase subunit 2 (356 aa).

An N-terminal signal peptide occupies residues 1 to 20; the sequence is MVKHWRLILLLALVPLLLSG. C21 carries the N-palmitoyl cysteine lipid modification. The S-diacylglycerol cysteine moiety is linked to residue C21. Topologically, residues 21–47 are extracellular; sequence CGKPFLSTLKPAGEVADKQYDLTVLST. Residues 21 to 257 form a cytochrome c oxidase subunit II region; the sequence is CGKPFLSTLK…KNYKSTAESD (237 aa). A helical transmembrane segment spans residues 48-66; that stretch reads LIMVVVVAVVSVIFFYVIV. Topologically, residues 67-87 are cytoplasmic; that stretch reads RFRRSRVGENTIPKQVEGNKF. A helical transmembrane segment spans residues 88-106; it reads LEITWTVIPILLLIILVIP. Residues 107–356 lie on the Extracellular side of the membrane; the sequence is VVLYTLELAD…YLKGLKAESK (250 aa). Cu cation contacts are provided by H176, C217, C221, and H225. One can recognise a Cytochrome c domain in the interval 258–356; the sequence is LAKQGEELFK…YLKGLKAESK (99 aa). C271, C274, H275, and M329 together coordinate heme c.

Belongs to the cytochrome c oxidase subunit 2 family. Cu cation is required as a cofactor. The cofactor is heme c.

The protein resides in the cell membrane. It catalyses the reaction 4 Fe(II)-[cytochrome c] + O2 + 8 H(+)(in) = 4 Fe(III)-[cytochrome c] + 2 H2O + 4 H(+)(out). Subunits I and II form the functional core of the enzyme complex. Electrons originating in cytochrome c are transferred via heme a and Cu(A) to the binuclear center formed by heme a3 and Cu(B). This is Cytochrome c oxidase subunit 2 (ctaC) from Bacillus subtilis (strain 168).